Reading from the N-terminus, the 186-residue chain is Ribosome-recycling factor (186 aa).

It belongs to the RRF family.

The protein resides in the cytoplasm. Functionally, responsible for the release of ribosomes from messenger RNA at the termination of protein biosynthesis. May increase the efficiency of translation by recycling ribosomes from one round of translation to another. In Paraburkholderia xenovorans (strain LB400), this protein is Ribosome-recycling factor.